The chain runs to 503 residues: D-alanine--D-alanyl carrier protein ligase (503 aa).

Residue 151–152 (TS) coordinates ATP. Asp196 contacts D-alanine. Residue 291–296 (NTYGPT) coordinates ATP. Residue Val300 participates in D-alanine binding. ATP is bound by residues Asp382, 393 to 396 (YNGR), and Lys491. Residue Lys491 coordinates D-alanine.

The protein belongs to the ATP-dependent AMP-binding enzyme family. DltA subfamily.

The protein resides in the cytoplasm. It carries out the reaction holo-[D-alanyl-carrier protein] + D-alanine + ATP = D-alanyl-[D-alanyl-carrier protein] + AMP + diphosphate. The protein operates within cell wall biogenesis; lipoteichoic acid biosynthesis. Its function is as follows. Catalyzes the first step in the D-alanylation of lipoteichoic acid (LTA), the activation of D-alanine and its transfer onto the D-alanyl carrier protein (Dcp) DltC. In an ATP-dependent two-step reaction, forms a high energy D-alanyl-AMP intermediate, followed by transfer of the D-alanyl residue as a thiol ester to the phosphopantheinyl prosthetic group of the Dcp. D-alanylation of LTA plays an important role in modulating the properties of the cell wall in Gram-positive bacteria, influencing the net charge of the cell wall. The protein is D-alanine--D-alanyl carrier protein ligase of Bacillus anthracis (strain A0248).